Reading from the N-terminus, the 273-residue chain is Transposable element Tc1 transposase (273 aa).

This sequence belongs to the transposase 5 family.

The protein localises to the nucleus. Its function is as follows. Probably essential for transposable element Tc1 transposition. The insertion of Tc1 is the main cause of spontaneous mutations. It is an endonuclease which can produce a single strand nick at the 5'-end of the transposon. This chain is Transposable element Tc1 transposase (tc1a), found in Caenorhabditis elegans.